A 1102-amino-acid chain; its full sequence is WD repeat-containing protein 72 (1102 aa).

WD repeat units lie at residues 15 to 54 (APPH…KISA), 60 to 102 (GHSA…CMEK), 160 to 197 (NCMC…NSIQ), 318 to 362 (KEQS…VSKF), 402 to 441 (AGTA…KARL), 459 to 504 (GHHQ…ILHK), 507 to 552 (LEAG…CLLH), and 555 to 594 (KHLF…LERH). 2 positions are modified to phosphoserine: serine 1081 and serine 1083.

Its subcellular location is the cytoplasmic vesicle. Functionally, plays a major role in formation of tooth enamel. Specifically required during the maturation phase of amelogenesis for normal formation of the enamel matrix and clearance of enamel proteins. May be involved in localization of the calcium transporter SLC24A4 to the ameloblast cell membrane. This is WD repeat-containing protein 72 (WDR72) from Homo sapiens (Human).